The following is a 247-amino-acid chain: NH(3)-dependent NAD(+) synthetase (247 aa).

29–36 (GISGGIDS) lines the ATP pocket. Asp-35 contacts Mg(2+). Deamido-NAD(+) is bound at residue Arg-120. Residue Thr-140 participates in ATP binding. Glu-145 contributes to the Mg(2+) binding site. Residues Lys-153 and Asp-160 each coordinate deamido-NAD(+). Residues Lys-169 and Ser-191 each contribute to the ATP site. 237–238 (HK) contacts deamido-NAD(+).

The protein belongs to the NAD synthetase family. Homodimer.

The enzyme catalyses deamido-NAD(+) + NH4(+) + ATP = AMP + diphosphate + NAD(+) + H(+). It functions in the pathway cofactor biosynthesis; NAD(+) biosynthesis; NAD(+) from deamido-NAD(+) (ammonia route): step 1/1. Its function is as follows. Catalyzes the ATP-dependent amidation of deamido-NAD to form NAD. Uses ammonia as a nitrogen source. In Alkaliphilus metalliredigens (strain QYMF), this protein is NH(3)-dependent NAD(+) synthetase.